The chain runs to 1174 residues: DNA-directed RNA polymerase subunit beta (1174 aa).

The protein belongs to the RNA polymerase beta chain family. In terms of assembly, the RNAP catalytic core consists of 2 alpha, 1 beta, 1 beta' and 1 omega subunit. When a sigma factor is associated with the core the holoenzyme is formed, which can initiate transcription.

It carries out the reaction RNA(n) + a ribonucleoside 5'-triphosphate = RNA(n+1) + diphosphate. In terms of biological role, DNA-dependent RNA polymerase catalyzes the transcription of DNA into RNA using the four ribonucleoside triphosphates as substrates. This is DNA-directed RNA polymerase subunit beta from Mycolicibacterium gilvum (strain PYR-GCK) (Mycobacterium gilvum (strain PYR-GCK)).